A 208-amino-acid chain; its full sequence is 2-phospho-L-lactate guanylyltransferase (208 aa).

It belongs to the CofC family. As to quaternary structure, homodimer.

The catalysed reaction is (2S)-2-phospholactate + GTP + H(+) = (2S)-lactyl-2-diphospho-5'-guanosine + diphosphate. Its pathway is cofactor biosynthesis; coenzyme F420 biosynthesis. Its function is as follows. Guanylyltransferase that catalyzes the activation of (2S)-2-phospholactate (2-PL) as (2S)-lactyl-2-diphospho-5'-guanosine, via the condensation of 2-PL with GTP. It is involved in the biosynthesis of coenzyme F420, a hydride carrier cofactor. This chain is 2-phospho-L-lactate guanylyltransferase, found in Methanosarcina barkeri (strain Fusaro / DSM 804).